Consider the following 165-residue polypeptide: NADH-quinone oxidoreductase subunit I (165 aa).

4Fe-4S ferredoxin-type domains follow at residues 57-86 and 96-125; these read RRYDNGEERCIACKLCEAVCPALAITIESE and SRYDIDLTKCIFCGFCEEACPVDAIVETHI. [4Fe-4S] cluster contacts are provided by cysteine 66, cysteine 69, cysteine 72, cysteine 76, cysteine 105, cysteine 108, cysteine 111, and cysteine 115.

It belongs to the complex I 23 kDa subunit family. As to quaternary structure, NDH-1 is composed of 14 different subunits. Subunits NuoA, H, J, K, L, M, N constitute the membrane sector of the complex. [4Fe-4S] cluster is required as a cofactor.

It is found in the cell inner membrane. It carries out the reaction a quinone + NADH + 5 H(+)(in) = a quinol + NAD(+) + 4 H(+)(out). Its function is as follows. NDH-1 shuttles electrons from NADH, via FMN and iron-sulfur (Fe-S) centers, to quinones in the respiratory chain. The immediate electron acceptor for the enzyme in this species is believed to be ubiquinone. Couples the redox reaction to proton translocation (for every two electrons transferred, four hydrogen ions are translocated across the cytoplasmic membrane), and thus conserves the redox energy in a proton gradient. The sequence is that of NADH-quinone oxidoreductase subunit I from Polaromonas sp. (strain JS666 / ATCC BAA-500).